The chain runs to 532 residues: MATPSAIPTNSKRDTTAQFHRVTRGNRSLWYQLTVLQQPERARACGSGMKANSDRRPVDPPPVVELRIVEGPTLEEGKDVTFDYNANFFLYASLEHARPIASCRVSTPTTNNPPILTGVPASGMAYLDRPSEAGYFIFPDLSVRHEGLYRLTFSLFETTKEEQDFDIQPADGDLPPGVDFRMEIKTDPFSVFSAKKFPGLMESTQLSKTVADQGCRVRIRRDVRMRKRDTKSGGNNNNNNNAGNNAGNNGFERREEDFGRRRTVTPAAEDPHGIRNRSQSNSSEHRASYSDVSRRPSMVDSYPPPPPPPPSYDPTPSAPRHLAFGESSGPKYPAPRQYAHQPGLQITPVPANGPYPSAAQSPYAKTDAPYGYSRHLPPSCPSPAPSVNRDLYDRRQSTSTYVPPSPSVYSTEGHYRRDSQASYPPTPAAAPLPRMNTEPSRGSIKISALVEPMPVIEPQVDPLPELPPVNVGGKRKHESVFAQNTRPLFNGQRQMDPHYGRSHRGYSPDHDQGSYSRADGQISVIQFNKYEY.

The Velvet domain maps to 26-220; that stretch reads NRSLWYQLTV…ADQGCRVRIR (195 aa). The Nuclear localization signal motif lies at 40 to 45; sequence ERARAC. Positions 217–229 are enriched in basic residues; that stretch reads VRIRRDVRMRKRD. Disordered stretches follow at residues 217-440 and 458-520; these read VRIR…TEPS and PQVD…RADG. The span at 233–250 shows a compositional bias: low complexity; it reads GGNNNNNNNAGNNAGNNG. Basic and acidic residues-rich tracts occupy residues 251-260 and 283-294; these read FERREEDFGR and SEHRASYSDVSR. Pro residues predominate over residues 302–317; sequence YPPPPPPPPSYDPTPS. Residues 397 to 411 are compositionally biased toward low complexity; sequence STSTYVPPSPSVYST. The PEST stretch occupies residues 435–463; the sequence is MNTEPSRGSIKISALVEPMPVIEPQVDPL. Residues 481–493 are compositionally biased toward polar residues; sequence FAQNTRPLFNGQR.

It belongs to the velvet family. VeA subfamily. As to quaternary structure, component of the heterotrimeric velvet complex composed of laeA, ve1 and velB; Ve1 acting as a bridging protein between laeA and velB. Interacts directly with laeA and velB.

The protein resides in the nucleus. It is found in the cytoplasm. Component of the velvet transcription factor complex that controls sexual/asexual developmental ratio in response to light, promoting sexual development in the darkness while stimulating asexual sporulation under illumination. The velvet complex hat acts as a global regulator for secondary metabolite gene expression. Controls the expression of the aurofusarin and trichothecene gene clusters. Also controls the expression of the deoxynivalenol (DON) gene cluster. Regulates hyphal growth and pigment formation. Acts as a positive regulator of virulence. This chain is Developmental and secondary metabolism regulator ve1, found in Gibberella zeae (strain ATCC MYA-4620 / CBS 123657 / FGSC 9075 / NRRL 31084 / PH-1) (Wheat head blight fungus).